The chain runs to 1004 residues: Receptor-type tyrosine-protein phosphatase N2 (1004 aa).

An N-terminal signal peptide occupies residues 1–27 (MGLPLPLLLLLLLPPPLPRALPAPASA). Residues 1–409 (MGLPLPLLLL…PEAPLLEKSS (409 aa)) form an involved in localization to secretory granules; interaction with CPE region. The Extracellular segment spans residues 28-603 (RGRQLPGRLG…HPEEQEDSTK (576 aa)). An Omega-N-methylarginine modification is found at arginine 259. Disordered regions lie at residues 274 to 294 (APAL…SLSM), 333 to 360 (QSDP…DAPE), and 393 to 459 (DHGS…WRLE). Phosphoserine is present on serine 340. 2 stretches are compositionally biased toward basic and acidic residues: residues 341-356 (QESH…REQA) and 407-418 (KSSRAEMKKSEQ). Acidic residues predominate over residues 419–430 (PEEVLSSEEETA). Residues serine 424 and serine 425 each carry the phosphoserine modification. The segment covering 431-450 (GVEHVKSRTYSKDLLERKPN) has biased composition (basic and acidic residues). N-linked (GlcNAc...) asparagine glycosylation occurs at asparagine 553. The helical transmembrane segment at 604–624 (FIVLTFLSIACILAVLLASSL) threads the bilayer. Residues 625 to 1004 (AYCLRHNSHY…VNAILKALPQ (380 aa)) are Cytoplasmic-facing. A Tyrosine-based internalization motif motif is present at residues 655 to 664 (YQELCRQRMA). Residues 665–710 (VRPQDHSEGPHTSRINSVSSQLSDGPMPSPSARSSTSSWSEEPAQS) form a disordered region. Polar residues predominate over residues 677–687 (SRINSVSSQLS). The residue at position 681 (serine 681) is a Phosphoserine; by PKA. Serine 687 carries the post-translational modification Phosphoserine. Residues 694–710 (PSARSSTSSWSEEPAQS) show a composition bias toward low complexity. Threonine 700 is modified (phosphothreonine; by PKA). The region spanning 734–994 (LEKEWEALCA…EFALTAVAEE (261 aa)) is the Tyrosine-protein phosphatase domain. Substrate is bound by residues aspartate 902 and 934–940 (CSDGAGR). The active-site Phosphocysteine intermediate is cysteine 934. An N6-acetyllysine modification is found at lysine 959. Glutamine 979 contacts substrate. The Leucine-based sorting signal motif lies at 993–999 (EEVNAIL).

It belongs to the protein-tyrosine phosphatase family. Receptor class 8 subfamily. Self-associates. Interacts (via cytoplasmic domain) with PTPRN (via cytoplasmic domain). Interacts (precursor form) with CPE. Interacts with HAP1. Interacts with AP2A1 or AP2A2 and AP1G1; indicative for an association with adaptor protein complex 2 (AP-2) and adaptor protein complex 1 (AP-1). Interacts with AP2M1; indicative for an association with adaptor protein complex 2 (AP-2). Interacts with MYO5A. Post-translationally, subject to proteolytic cleavage at multiple sites.

Its subcellular location is the cytoplasmic vesicle. The protein resides in the secretory vesicle membrane. It is found in the secretory vesicle. It localises to the synaptic vesicle membrane. It carries out the reaction O-phospho-L-tyrosyl-[protein] + H2O = L-tyrosyl-[protein] + phosphate. In terms of biological role, plays a role in vesicle-mediated secretory processes. Required for normal accumulation of secretory vesicles in hippocampus, pituitary and pancreatic islets. Required for the accumulation of normal levels of insulin-containing vesicles and preventing their degradation. Plays a role in insulin secretion in response to glucose stimuli. Required for normal accumulation of the neurotransmitters norepinephrine, dopamine and serotonin in the brain. In females, but not in males, required for normal accumulation and secretion of pituitary hormones, such as luteinizing hormone (LH) and follicle-stimulating hormone (FSH). Required to maintain normal levels of renin expression and renin release. May regulate catalytic active protein-tyrosine phosphatases such as PTPRA through dimerization. Has phosphatidylinositol phosphatase activity; the PIPase activity is involved in its ability to regulate insulin secretion. Can dephosphorylate phosphatidylinositol 4,5-biphosphate, phosphatidylinositol 5-phosphate and phosphatidylinositol 3-phosphate. Regulates PI(4,5)P2 level in the plasma membrane and localization of cofilin at the plasma membrane and thus is indirectly involved in regulation of actin dynamics related to cell migration and metastasis; upon hydrolysis of PI(4,5)P2 cofilin is released from the plasma membrane and acts in the cytoplasm in severing F-actin filaments. The protein is Receptor-type tyrosine-protein phosphatase N2 (Ptprn2) of Rattus norvegicus (Rat).